The chain runs to 525 residues: D-3-phosphoglycerate dehydrogenase (525 aa).

NAD(+) contacts are provided by residues 148 to 149 (RI), aspartate 168, threonine 200, 227 to 229 (CAR), and aspartate 253. The active site involves arginine 229. Glutamate 258 is an active-site residue. The active-site Proton donor is the histidine 276. 276–279 (HLGA) is a binding site for NAD(+). An ACT domain is found at 452–524 (LVYIQHQDTT…DIVSVKLIDL (73 aa)).

Belongs to the D-isomer specific 2-hydroxyacid dehydrogenase family.

It catalyses the reaction (2R)-3-phosphoglycerate + NAD(+) = 3-phosphooxypyruvate + NADH + H(+). It carries out the reaction (R)-2-hydroxyglutarate + NAD(+) = 2-oxoglutarate + NADH + H(+). It functions in the pathway amino-acid biosynthesis; L-serine biosynthesis; L-serine from 3-phospho-D-glycerate: step 1/3. With respect to regulation, in bacteria displays feedback inhibition by L-serine. Its function is as follows. Catalyzes the reversible oxidation of 3-phospho-D-glycerate to 3-phosphonooxypyruvate, the first step of the phosphorylated L-serine biosynthesis pathway. Also catalyzes the reversible oxidation of 2-hydroxyglutarate to 2-oxoglutarate. The chain is D-3-phosphoglycerate dehydrogenase (serA) from Bacillus subtilis (strain 168).